A 364-amino-acid chain; its full sequence is Putative apoptosis inhibitor ORF42 (364 aa).

Residues 24 to 89 (RLATFRGYEY…CREGVVSAPQ (66 aa)) form a BIR 1 repeat. Residues 83–126 (GVVSAPQQQPPPPPSTSIGAVGGDPRPEDMNVPERGWDPPMSKD) are disordered. A compositionally biased stretch (basic and acidic residues) spans 117–126 (RGWDPPMSKD). 2 BIR repeats span residues 127–193 (PKST…PLVV) and 236–300 (RIAS…ANMA). Residues 315–350 (CVICLGAKADTILKPCLHYSLCYGCSTQVQKCPLCR) form an RING-type zinc finger.

May act as an apoptosis inhibitor. The protein is Putative apoptosis inhibitor ORF42 of Magallana gigas (Pacific oyster).